The sequence spans 91 residues: DNA-directed RNA polymerase subunit omega (91 aa).

The protein belongs to the RNA polymerase subunit omega family. As to quaternary structure, the RNAP catalytic core consists of 2 alpha, 1 beta, 1 beta' and 1 omega subunit. When a sigma factor is associated with the core the holoenzyme is formed, which can initiate transcription.

It catalyses the reaction RNA(n) + a ribonucleoside 5'-triphosphate = RNA(n+1) + diphosphate. Its function is as follows. Promotes RNA polymerase assembly. Latches the N- and C-terminal regions of the beta' subunit thereby facilitating its interaction with the beta and alpha subunits. The polypeptide is DNA-directed RNA polymerase subunit omega (Syntrophus aciditrophicus (strain SB)).